A 130-amino-acid chain; its full sequence is Small ribosomal subunit protein uS11 (130 aa).

The protein belongs to the universal ribosomal protein uS11 family. Part of the 30S ribosomal subunit. Interacts with proteins S7 and S18. Binds to IF-3.

In terms of biological role, located on the platform of the 30S subunit, it bridges several disparate RNA helices of the 16S rRNA. Forms part of the Shine-Dalgarno cleft in the 70S ribosome. The sequence is that of Small ribosomal subunit protein uS11 from Prochlorococcus marinus (strain MIT 9211).